The chain runs to 101 residues: Urease subunit beta (101 aa).

It belongs to the urease beta subunit family. As to quaternary structure, heterotrimer of UreA (gamma), UreB (beta) and UreC (alpha) subunits. Three heterotrimers associate to form the active enzyme.

It localises to the cytoplasm. The enzyme catalyses urea + 2 H2O + H(+) = hydrogencarbonate + 2 NH4(+). It participates in nitrogen metabolism; urea degradation; CO(2) and NH(3) from urea (urease route): step 1/1. The polypeptide is Urease subunit beta (Burkholderia vietnamiensis (strain G4 / LMG 22486) (Burkholderia cepacia (strain R1808))).